A 207-amino-acid chain; its full sequence is Large ribosomal subunit protein uL4 (207 aa).

The interval 45–78 (RQGTHAVKNRSAVRGGGRKPWRQKGTGRARQGSI) is disordered. Residues 60 to 71 (GGRKPWRQKGTG) are compositionally biased toward basic residues.

This sequence belongs to the universal ribosomal protein uL4 family. In terms of assembly, part of the 50S ribosomal subunit.

One of the primary rRNA binding proteins, this protein initially binds near the 5'-end of the 23S rRNA. It is important during the early stages of 50S assembly. It makes multiple contacts with different domains of the 23S rRNA in the assembled 50S subunit and ribosome. Its function is as follows. Forms part of the polypeptide exit tunnel. In Pediococcus pentosaceus (strain ATCC 25745 / CCUG 21536 / LMG 10740 / 183-1w), this protein is Large ribosomal subunit protein uL4.